The primary structure comprises 156 residues: Ribosomal RNA large subunit methyltransferase H (156 aa).

Residues leucine 73, glycine 104, and 123–128 contribute to the S-adenosyl-L-methionine site; that span reads LSPLTL.

This sequence belongs to the RNA methyltransferase RlmH family. As to quaternary structure, homodimer.

It is found in the cytoplasm. The enzyme catalyses pseudouridine(1915) in 23S rRNA + S-adenosyl-L-methionine = N(3)-methylpseudouridine(1915) in 23S rRNA + S-adenosyl-L-homocysteine + H(+). Specifically methylates the pseudouridine at position 1915 (m3Psi1915) in 23S rRNA. This Marinobacter nauticus (strain ATCC 700491 / DSM 11845 / VT8) (Marinobacter aquaeolei) protein is Ribosomal RNA large subunit methyltransferase H.